The sequence spans 204 residues: Dephospho-CoA kinase (204 aa).

The 198-residue stretch at 3-200 (VVAITGGIGS…ETYMAFASQQ (198 aa)) folds into the DPCK domain. Residue 11 to 16 (GSGKTT) coordinates ATP.

This sequence belongs to the CoaE family.

The protein localises to the cytoplasm. It catalyses the reaction 3'-dephospho-CoA + ATP = ADP + CoA + H(+). It participates in cofactor biosynthesis; coenzyme A biosynthesis; CoA from (R)-pantothenate: step 5/5. In terms of biological role, catalyzes the phosphorylation of the 3'-hydroxyl group of dephosphocoenzyme A to form coenzyme A. In Aeromonas hydrophila, this protein is Dephospho-CoA kinase.